The following is a 310-amino-acid chain: Isoflavone reductase homolog A622-like (310 aa).

NADP(+)-binding positions include 13 to 19 (GGTGYIG), Arg-38, and Lys-47. The active-site Proton acceptor is Lys-135. Arg-139 provides a ligand contact to NADP(+).

The protein belongs to the NmrA-type oxidoreductase family. Isoflavone reductase subfamily. Monomer. As to expression, expressed in roots.

The protein localises to the cytoplasm. It participates in alkaloid biosynthesis; nicotine biosynthesis. Its function is as follows. Involved in the biosynthesis of pyridine alkaloid natural products, leading mainly to the production of anabasine, anatabine, nicotine and nornicotine, effective deterrents against herbivores with antiparasitic and pesticide properties (neurotoxins); nornicotine serves as the precursor in the synthesis of the carcinogen compound N'-nitrosonornicotine (NNN). Reductase that may be involved in a late step of tobacco alkaloid biosynthesis. Maybe involved in either the formation of a nicotinic acid-derived precursor or the final condensation reaction of tobacco alkaloids. The protein is Isoflavone reductase homolog A622-like of Nicotiana tabacum (Common tobacco).